A 749-amino-acid polypeptide reads, in one-letter code: Photosystem I P700 chlorophyll a apoprotein A2 (749 aa).

8 helical membrane-spanning segments follow: residues 46 to 69, 135 to 158, 175 to 199, 273 to 291, 343 to 366, 382 to 408, 430 to 452, and 532 to 550; these read LFST…FHIA, LYQG…LHLQ, MNHH…HVAI, ISHH…GHMY, LHFQ…HHMG, AALY…IFFV, ALIS…LYLH, and FLVH…LILI. Residues C574 and C583 each coordinate [4Fe-4S] cluster. Helical transmembrane passes span 590–611 and 658–680; these read STYM…YWHW and LSPW…MFLI. H669, M677, and Y685 together coordinate divinyl chlorophyll a. W686 lines the phylloquinone pocket. A helical membrane pass occupies residues 722 to 742; it reads LVGVTHFAVGNIFTFGAFVIA.

The protein belongs to the PsaA/PsaB family. As to quaternary structure, the PsaA/B heterodimer binds the P700 chlorophyll special pair and subsequent electron acceptors. PSI consists of a core antenna complex that captures photons, and an electron transfer chain that converts photonic excitation into a charge separation. The cyanobacterial PSI reaction center is composed of one copy each of PsaA,B,C,D,E,F,I,J,K,L,M and X, and forms trimeric complexes. Requires PSI electron transfer chain: 5 divinyl chlorophyll a, 1 divinyl chlorophyll a', 2 phylloquinones and 3 4Fe-4S clusters. PSI core antenna: 90 divinyl chlorophyll a, 22 carotenoids, 3 phospholipids and 1 galactolipid. P700 is a divinyl chlorophyll a/divinyl chlorophyll a' dimer, A0 is one or more divinyl chlorophyll a, A1 is one or both phylloquinones and FX is a shared 4Fe-4S iron-sulfur center. as cofactor.

Its subcellular location is the cellular thylakoid membrane. The enzyme catalyses reduced [plastocyanin] + hnu + oxidized [2Fe-2S]-[ferredoxin] = oxidized [plastocyanin] + reduced [2Fe-2S]-[ferredoxin]. In terms of biological role, psaA and PsaB bind P700, the primary electron donor of photosystem I (PSI), as well as the electron acceptors A0, A1 and FX. PSI is a plastocyanin/cytochrome c6-ferredoxin oxidoreductase, converting photonic excitation into a charge separation, which transfers an electron from the donor P700 chlorophyll pair to the spectroscopically characterized acceptors A0, A1, FX, FA and FB in turn. Oxidized P700 is reduced on the lumenal side of the thylakoid membrane by plastocyanin or cytochrome c6. The sequence is that of Photosystem I P700 chlorophyll a apoprotein A2 from Prochlorococcus marinus (strain MIT 9313).